Reading from the N-terminus, the 1303-residue chain is MLRAKLVDDPQIKYASLHNPLPTQLHAYVWPFLIIWPAFFAVYLSPERYDTYIQGQEWTFVWSGSIITAQSLLWLMTKWNINIQTLFTATKARSLDSAQLIKVIPVANAGSAEICPLHCDTMGGKKTFSFLFQKRRFLYYPERQCFAPLSYVLDAEPKPPVKVFQQAQGLTSKEEIDRIQHHYGDNTFDIPVPTFMELFKEHAVAPFFVFQVFCVGLWMLDEYWYYSLFTLFMLVVFESTVVWQRQRTLNEFRGMNIKPYDVWVYRQKKWQELTSDKLLPGDLMSVNRTKEDSGVACDILLIEGSAIVNEAMLSGESTPLLKESIQLRPGDDLIDPDGLDKNAFVHGGTKVLQITHHNSNGEDGSEKARKLSSGVPLPPDNGAVGVVVKTGFETSQGSLVRTMIYSTERVSANNVEALLFILFLLIFAIAAAWYVWQEGVAKDRKRSKLLLDCVLIVTSVVPPELPMELSLAVNTSLAALSKFAIFCTEPFRIPFAGRVDVACFDKTGTLTGEDLVVDGIAGLTLGHEGADVGKDGAHTELAKSANVPLDTTLVLASAHALVKLDEGEVVGDPMEKATLQWLGWTLGRNDTLMSKAAALAGPRTVESVQIKRRFQFSSALKRQSTIATVVTADRKTSKKTKATFVGVKGAPETIRTMLVNTPPHYEETFKYFTRNGARVLALAYKYLSEESELSQGRINGYIREEIEADLIFAGFLVLQCPLKEDAIKAVRMLNESSHRVVMITGDNPLTAVHVARKVEIVDRDVLILDAPEDDMSGTRLVWRSIDDKFNRDVDPTQDLDPEIIETKDICITGYALAKFKGQKAFSTLLRHTWVYARVSPKQKEDILVGLKDAGYTTLMCGDGTNDVGALKQAHVGVALLNGSPEDLAKIAEHYRTTKMKEIYEKQVSMMQRFNQPPPPVPVQIAHLYPPGPRNPHYQKAMEREAQRKGAATLATAGNQTEHIPTITSPGAQALQQSNANLTPQQQRQQQASIAAAGFADKLTSSMLEQELDDSEPPTIKLGDASVAAPFTSKLANVIAIPNILRQGRCTLVATIQMYKILALNCLISAYSLSVIYLDGIKFGDGQVTISGMLMSVCFLSISRAKSVEGLSKERPQPNIFNVYIIGSVLGQFAIHIATLIYLSNYVYSIEPRKSDIDLEGEFEPSLLNSAIYLLQLIQQISTFSINYQGRPFRESIRENKAMYWGLVAASGVAFSCATEFIPELNEKMRLVPFSTEFKVTLTVLMIIDYAGCWIIENVLKNLFSDFRPKDIAVRRPDQLQREMERKKQEELETQAEKERQRKV.

The next 2 helical transmembrane spans lie at 25 to 45 (LHAYVWPFLIIWPAFFAVYLS) and 57 to 77 (EWTFVWSGSIITAQSLLWLMT). The interval 158–191 (KPPVKVFQQAQGLTSKEEIDRIQHHYGDNTFDIP) is A-domain; part 1. The next 2 helical transmembrane spans lie at 201-221 (EHAVAPFFVFQVFCVGLWMLD) and 223-243 (YWYYSLFTLFMLVVFESTVVW). Positions 256-408 (NIKPYDVWVY…LVRTMIYSTE (153 aa)) are A-domain; part 2. A glycan (N-linked (GlcNAc...) asparagine) is linked at Asn287. A helical transmembrane segment spans residues 415-435 (VEALLFILFLLIFAIAAAWYV). Asn474 carries N-linked (GlcNAc...) asparagine glycosylation. The P-domain; part 1 stretch occupies residues 484-513 (AIFCTEPFRIPFAGRVDVACFDKTGTLTGE). Residue Asp505 is the 4-aspartylphosphate intermediate of the active site. Residues Asp505 and Thr507 each coordinate Mg(2+). 505–507 (DKT) contributes to the ATP binding site. The tract at residues 515–721 (LVVDGIAGLT…FAGFLVLQCP (207 aa)) is N-domain. N-linked (GlcNAc...) asparagine glycosylation is present at Asn589. 2 residues coordinate ATP: Phe616 and Arg678. A P-domain; part 2 region spans residues 724-883 (EDAIKAVRML…HVGVALLNGS (160 aa)). A glycan (N-linked (GlcNAc...) asparagine) is linked at Asn734. Residues Asp746 and 862–866 (DGTND) contribute to the ATP site. Mg(2+) is bound at residue Asp862. The interval 884 to 1019 (PEDLAKIAEH…ELDDSEPPTI (136 aa)) is arm-like. Residue Asn958 is glycosylated (N-linked (GlcNAc...) asparagine). The tract at residues 1020–1035 (KLGDASVAAPFTSKLA) is P-domain; part 3. The next 5 helical transmembrane spans lie at 1060–1080 (ILALNCLISAYSLSVIYLDGI), 1082–1102 (FGDGQVTISGMLMSVCFLSIS), 1122–1142 (VYIIGSVLGQFAIHIATLIYL), 1201–1221 (AMYWGLVAASGVAFSCATEFI), and 1239–1259 (VTLTVLMIIDYAGCWIIENVL). The disordered stretch occupies residues 1277-1303 (DQLQREMERKKQEELETQAEKERQRKV).

The protein belongs to the cation transport ATPase (P-type) (TC 3.A.3) family. Type V subfamily. Requires Mg(2+) as cofactor.

It localises to the endoplasmic reticulum membrane. The enzyme catalyses [protein]-with a C-terminal TM segment(out) + ATP + H2O = [protein]-with a C-terminal TM segment(in) + ADP + phosphate + H(+). The ATPase activity is stimulated by phosphatidylinositol 4-phosphate (PI4P). Functionally, endoplasmic reticulum (ER) translocase required to remove mitochondrial transmembrane proteins mistargeted to the endoplasmic reticulum. Acts as a dislocase that mediates the ATP-dependent extraction of mislocalized mitochondrial transmembrane proteins from the endoplasmic reticulum membrane. Works in concert with the ER Ca(2+) pump srcA to support ER homeostasis. With srcA, also supports redox homeostasis and virulence. The polypeptide is Endoplasmic reticulum transmembrane helix translocase spfA (Aspergillus fumigatus (strain ATCC MYA-4609 / CBS 101355 / FGSC A1100 / Af293) (Neosartorya fumigata)).